Here is an 860-residue protein sequence, read N- to C-terminus: GAS2-like protein 2 (860 aa).

The span at 1–12 shows a compositional bias: basic residues; it reads MSQHVGHGRRPR. The interval 1 to 22 is disordered; sequence MSQHVGHGRRPRTPGPPVRSIR. One can recognise a Calponin-homology (CH) domain in the interval 32 to 159; the sequence is EAMKEDLAEW…CLLELGRRAW (128 aa). The GAR domain maps to 201 to 273; sequence CHFHNLDQMV…HYLDKHDPCR (73 aa). Disordered regions lie at residues 281–459, 473–574, 697–743, 758–781, and 801–860; these read PGSF…SLAS, QLSE…RHTS, TTVR…KGKR, KLRP…IPKP, and ATLG…ESWV. Positions 301-316 are enriched in polar residues; sequence GPSQPQPTMTISRSQS. The segment covering 347–364 has biased composition (basic and acidic residues); the sequence is PPVRARTLREDPLPRSQE. 2 stretches are compositionally biased toward polar residues: residues 365–393 and 473–485; these read KPTP…STLS and QLSE…SSSP. The interval 431–860 is interaction with ADORA2A and GNAS; it reads QRLQIPEATS…PLSPEEESWV (430 aa). Residues 530–549 are compositionally biased toward basic and acidic residues; sequence NLDRSTHGHHSVEASGDHQT. Positions 724–733 are enriched in polar residues; sequence RSCSDPSSDK. The span at 758-768 shows a compositional bias: basic residues; that stretch reads KLRPRIRPRRD. Residues 828-840 are compositionally biased toward polar residues; it reads SNISLESSIQPAE.

The protein belongs to the GAS2 family. Interacts with ADORA2A (via its cytoplasmic C-terminal domain). Interacts with GNAS, GNAL, GNAQ, and GNA13. Interacts with MAPRE1. As to expression, expressed in tracheal epithelial cells (at protein level).

Its subcellular location is the cytoplasm. It localises to the cytoskeleton. The protein localises to the cell membrane. It is found in the stress fiber. The protein resides in the cilium basal body. Its function is as follows. Involved in the cross-linking of microtubules and microfilaments. Regulates microtubule dynamics and stability by interacting with microtubule plus-end tracking proteins, such as MAPRE1, to regulate microtubule growth along actin stress fibers. Enhances ADORA2-mediated adenylyl cyclase activation by acting as a scaffold to recruit trimeric G-protein complexes to ADORA2A. Regulates ciliary orientation and performance in cells located in the airway. This is GAS2-like protein 2 (Gas2l2) from Mus musculus (Mouse).